We begin with the raw amino-acid sequence, 457 residues long: 4-hydroxybenzoate transporter PcaK (457 aa).

Residues 1-34 (MPKEANMASQDYATQRSSLDAQALINDAPLSRYQ) lie on the Cytoplasmic side of the membrane. The chain crosses the membrane as a helical span at residues 35–55 (WLIAIVCFLIVFVDGIDTAAM). The Periplasmic portion of the chain corresponds to 56-72 (GFIAPALAQDWGVDRSQ). A helical membrane pass occupies residues 73–93 (LGPVMSAALGGMIIGALVSGP). Topologically, residues 94–101 (TADRFGRK) are cytoplasmic. The helical transmembrane segment at 102–122 (IVLSMSMLVFGGFTLACAYST) threads the bilayer. Residues 123-128 (NLDSLV) are Periplasmic-facing. The chain crosses the membrane as a helical span at residues 129–149 (IFRFLTGIGLGAAMPNATTLF). Topologically, residues 150-168 (SEYCPARIRSLLVTCMFCG) are cytoplasmic. A helical membrane pass occupies residues 169 to 189 (YNLGMAIGGFISSWLIPAFGW). The Periplasmic segment spans residues 190-191 (HS). A helical transmembrane segment spans residues 192-212 (LFLLGGWAPLILMLLVIFFLP). At 213 to 274 (ESYRFLIVKG…LFSAKYVKGT (62 aa)) the chain is on the cytoplasmic side. Residues 275–295 (VLLWVTYFMGLVMIYLLTSWL) form a helical membrane-spanning segment. Topologically, residues 296-310 (PTLMRETGASLERAA) are periplasmic. A helical transmembrane segment spans residues 311–331 (FLGGLFQFGGVLSALFIGWAM). The Cytoplasmic portion of the chain corresponds to 332–338 (DRFNPNR). The helical transmembrane segment at 339–359 (IIAGFYLAAGIFAVIVGQSLS) threads the bilayer. Residues 360 to 363 (NPTL) are Periplasmic-facing. Residues 364-384 (LALFILCAGIAVNGAQSSMPV) form a helical membrane-spanning segment. Topologically, residues 385–400 (LSARFYPTQCRATGVA) are cytoplasmic. Residues 401 to 421 (WMSGIGRFGAVFGAWIGAVLL) traverse the membrane as a helical segment. The Periplasmic segment spans residues 422–426 (GNNWS). A helical transmembrane segment spans residues 427–447 (FTMILSMLIIPAAAAAIAIFV). Over 448-457 (KSLVAHTDAT) the chain is Cytoplasmic.

The protein belongs to the major facilitator superfamily. Aromatic acid:H(+) symporter (AAHS) (TC 2.A.1.15) family. In terms of assembly, homotrimer.

It is found in the cell inner membrane. Functionally, uptake of 4-hydroxybenzoate (4-HB). Can also transport a variety of aromatic acids with hydroxyl substitutions at the 2-, 3- and 4-positions, such as salicylate, 2,4-dihydroxybenzoate, protocatechuate, 3-hydroxybenzoate, vanillate and gentisate. The protein is 4-hydroxybenzoate transporter PcaK of Acinetobacter baylyi (strain ATCC 33305 / BD413 / ADP1).